The chain runs to 221 residues: Ribosomal RNA large subunit methyltransferase E (221 aa).

The S-adenosyl-L-methionine site is built by Gly-60, Trp-62, Asp-89, Asp-105, and Asp-134. Residue Lys-174 is the Proton acceptor of the active site.

Belongs to the class I-like SAM-binding methyltransferase superfamily. RNA methyltransferase RlmE family.

It is found in the cytoplasm. It catalyses the reaction uridine(2552) in 23S rRNA + S-adenosyl-L-methionine = 2'-O-methyluridine(2552) in 23S rRNA + S-adenosyl-L-homocysteine + H(+). Functionally, specifically methylates the uridine in position 2552 of 23S rRNA at the 2'-O position of the ribose in the fully assembled 50S ribosomal subunit. The chain is Ribosomal RNA large subunit methyltransferase E from Cupriavidus metallidurans (strain ATCC 43123 / DSM 2839 / NBRC 102507 / CH34) (Ralstonia metallidurans).